A 143-amino-acid chain; its full sequence is Transcriptional regulator MraZ (143 aa).

SpoVT-AbrB domains are found at residues 5-47 and 76-119; these read EYHH…SMEE and AMES…AKER.

The protein belongs to the MraZ family. As to quaternary structure, forms oligomers.

The protein localises to the cytoplasm. Its subcellular location is the nucleoid. The polypeptide is Transcriptional regulator MraZ (Lactobacillus helveticus (strain DPC 4571)).